An 809-amino-acid polypeptide reads, in one-letter code: MAQILLHGTLHATIYEVDELHGGGGGNFFSKLKQNIEETVGIGKGVTKLYATIDLEKARVGRTRIIENETTNPKWNESFHIYCGHLASNIIFTVKDDNPIGATLIGRAYVPVSEVLDGHEIDKWVEILDTEKNPIEGGSKIHVRLQYFDVLKDRNWARGIRSPKYPGVPYTFFSQRQGCKVFLYQDAHVPDNFVPKIPLAGGKNYEAHRCWEDIFDAITNAKHLIYITGWSVYTEISLIRDSRRPKAGGDQTIGELLKKKASEGVRVLMLVWDDRTSVGLLKKDGLMATHDEETEQFFRDTDVHCVLCPRNPDDGGSIVQDLQISTMFTHHQKIVVVDSALPGGGGSDKRRIVSFVGGLDLCDGRYDTAFHSLFRTLDTAHHDDFHQPNFPGAAITKGGPREPWHDIHSRVEGPIAWDVLFNFEQRWRKQGGKDILAPLRELEDVIIPPSPVTFPDDHETWNVQLFRSIDGGAAFGFPDTPEDAAKAGLVSGKDNIIDRSIQDAYIHAIRRAKNFIYIENQYFLGSSFSWNNDDIKREEIGALHLIPKELSLKIVSKIEAGERFAVYVVVPMWPEGIPESSSVQAILDWQKRTIEMMYKDVVQALRAKGSDEDPRNYLTFFCLGNREVKKSGEYEPAEQPEPDSDYQRAQEARRFMIYVHTKMMIVDDEYIIIGSANINQRSMDGARDSEIAMGGYQPYHLANTQPARGQVYGFRMSLWYEHLGMLHDTFQRPESEECINKVNQIADKYWDLYSSESLERDLPGHLLRYPIGVASEGEVTELPGFEFFPDTKARILGAKADYLPPILTT.

The C2 domain maps to 1-125 (MAQILLHGTL…LDGHEIDKWV (125 aa)). D186 contacts Ca(2+). In terms of domain architecture, PLD phosphodiesterase 1 spans 326-365 (TMFTHHQKIVVVDSALPGGGGSDKRRIVSFVGGLDLCDGR). Residues H331, K333, and D338 contribute to the active site. H331 contributes to the a 1,2-diacyl-sn-glycero-3-phosphate binding site. H371 and H405 together coordinate Ca(2+). A 1,2-diacyl-sn-glycero-3-phosphate-binding residues include Q521 and H660. A PLD phosphodiesterase 2 domain is found at 655–682 (FMIYVHTKMMIVDDEYIIIGSANINQRS). Catalysis depends on residues H660, K662, and D667. A Ca(2+)-binding site is contributed by E721.

It belongs to the phospholipase D family. C2-PLD subfamily. Requires Ca(2+) as cofactor.

It carries out the reaction a 1,2-diacyl-sn-glycero-3-phosphocholine + H2O = a 1,2-diacyl-sn-glycero-3-phosphate + choline + H(+). Hydrolyzes glycerol-phospholipids at the terminal phosphodiesteric bond. Plays an important role in various cellular processes. The sequence is that of Phospholipase D alpha 1 (PLD1) from Vigna unguiculata (Cowpea).